The chain runs to 349 residues: METPQPDKTGMHILLKLASLVVILAGIHAAADIIVQLLLALFFAIVLNPLVTWFIRRGVQRPVAITIVVVVMLIALTALVGVLAASFNEFISMLPKFNKELTRKLFKLQEMLPFLNLHMSPERMLQRMDSEKVVTFTTALMTGLSGAMASVLLLVMTVVFMLFEVRHVPYKMRFALNNPQIHIAGLHRALKGVSHYLALKTLLSLWTGVIVWLGLELMGVQFALMWAVLAFLLNYVPNIGAVISAVPPMIQVLLFNGVYECILVGALFLVVHMVIGNILEPRMMGHRLGMSTMVVFLSLLIWGWLLGPVGMLLSVPLTSVCKIWMETTKGGSKLAILLGPGRPKSRLPG.

Over 1-10 the chain is Cytoplasmic; sequence METPQPDKTG. Residues 11–31 traverse the membrane as a helical segment; sequence MHILLKLASLVVILAGIHAAA. Position 32 (Asp-32) is a topological domain, periplasmic. A helical transmembrane segment spans residues 33-53; the sequence is IIVQLLLALFFAIVLNPLVTW. At 54-62 the chain is on the cytoplasmic side; the sequence is FIRRGVQRP. Residues 63–83 traverse the membrane as a helical segment; that stretch reads VAITIVVVVMLIALTALVGVL. The Periplasmic portion of the chain corresponds to 84–142; sequence AASFNEFISMLPKFNKELTRKLFKLQEMLPFLNLHMSPERMLQRMDSEKVVTFTTALMT. A helical membrane pass occupies residues 143 to 163; the sequence is GLSGAMASVLLLVMTVVFMLF. At 164–208 the chain is on the cytoplasmic side; the sequence is EVRHVPYKMRFALNNPQIHIAGLHRALKGVSHYLALKTLLSLWTG. The chain crosses the membrane as a helical span at residues 209–229; it reads VIVWLGLELMGVQFALMWAVL. The Periplasmic portion of the chain corresponds to 230-234; sequence AFLLN. Residues 235 to 255 form a helical membrane-spanning segment; sequence YVPNIGAVISAVPPMIQVLLF. The Cytoplasmic segment spans residues 256 to 257; the sequence is NG. The chain crosses the membrane as a helical span at residues 258–278; sequence VYECILVGALFLVVHMVIGNI. At 279 to 292 the chain is on the periplasmic side; sequence LEPRMMGHRLGMST. Residues 293–313 traverse the membrane as a helical segment; it reads MVVFLSLLIWGWLLGPVGMLL. The Cytoplasmic segment spans residues 314–349; it reads SVPLTSVCKIWMETTKGGSKLAILLGPGRPKSRLPG.

This sequence belongs to the autoinducer-2 exporter (AI-2E) (TC 2.A.86) family.

It is found in the cell inner membrane. This is Putative transport protein YhhT (yhhT) from Escherichia coli O157:H7.